A 200-amino-acid chain; its full sequence is Small ribosomal subunit protein uS4c (200 aa).

Residues 20-42 (GLTRKTTTRTSRPGQHGTQARKP) are disordered. Positions 23 to 37 (RKTTTRTSRPGQHGT) are enriched in polar residues. The region spanning 90–152 (MRLDNVIFRL…PKSQSIVKNY (63 aa)) is the S4 RNA-binding domain.

This sequence belongs to the universal ribosomal protein uS4 family. In terms of assembly, part of the 30S ribosomal subunit. Contacts protein S5. The interaction surface between S4 and S5 is involved in control of translational fidelity.

The protein resides in the plastid. It localises to the chloroplast. Functionally, one of the primary rRNA binding proteins, it binds directly to 16S rRNA where it nucleates assembly of the body of the 30S subunit. In terms of biological role, with S5 and S12 plays an important role in translational accuracy. In Guillardia theta (Cryptophyte), this protein is Small ribosomal subunit protein uS4c (rps4).